A 605-amino-acid polypeptide reads, in one-letter code: Aspartate--tRNA(Asp/Asn) ligase (605 aa).

L-aspartate is bound at residue glutamate 172. The segment at 196-199 (QLFK) is aspartate. Position 218 (arginine 218) interacts with L-aspartate. Residues 218 to 220 (RDE) and glutamine 227 each bind ATP. Position 455 (histidine 455) interacts with L-aspartate. Glutamate 489 lines the ATP pocket. Arginine 496 contacts L-aspartate. ATP is bound at residue 541–544 (GLDR).

The protein belongs to the class-II aminoacyl-tRNA synthetase family. Type 1 subfamily. In terms of assembly, homodimer.

It localises to the cytoplasm. The catalysed reaction is tRNA(Asx) + L-aspartate + ATP = L-aspartyl-tRNA(Asx) + AMP + diphosphate. Its function is as follows. Aspartyl-tRNA synthetase with relaxed tRNA specificity since it is able to aspartylate not only its cognate tRNA(Asp) but also tRNA(Asn). Reaction proceeds in two steps: L-aspartate is first activated by ATP to form Asp-AMP and then transferred to the acceptor end of tRNA(Asp/Asn). In Ralstonia nicotianae (strain ATCC BAA-1114 / GMI1000) (Ralstonia solanacearum), this protein is Aspartate--tRNA(Asp/Asn) ligase.